The following is a 253-amino-acid chain: Phycoerythrobilin:ferredoxin oxidoreductase (253 aa).

The protein belongs to the HY2 family.

It catalyses the reaction (3Z)-phycoerythrobilin + oxidized 2[4Fe-4S]-[ferredoxin] = 15,16-dihydrobiliverdin + reduced 2[4Fe-4S]-[ferredoxin] + 2 H(+). Functionally, catalyzes the two-electron reduction of the C2 and C3(1) diene system of 15,16-dihydrobiliverdin. This Prochlorococcus marinus (strain MIT 9312) protein is Phycoerythrobilin:ferredoxin oxidoreductase.